Consider the following 235-residue polypeptide: MKLSLLTVAAAAGAAVAAPAAEIDTRAGSVQGFDISGYQPNVDFRAAYNGGARFVMIKATEGTTFKSSTFNSQYTGATNNKFIRGGYHFAHPDTSATAQCDYFLANGGGWSNDGITLPGMIDLEGTSGKPKCYGLSASAMIAWIKAFSDRYNAKTGRYPMIYTSPDWWQSCTGNTKTFGTTIPLVLARWASSPGTPPGGWPYHTFWQNADTYRFGGDSEIFNGGMDQLQRFAKGG.

A signal peptide spans 1-17; it reads MKLSLLTVAAAAGAAVA. One can recognise a Ch-type lysozyme domain in the interval 29–235; it reads SVQGFDISGY…DQLQRFAKGG (207 aa). Active-site residues include D34, D122, and E124. The cysteines at positions 132 and 171 are disulfide-linked.

The protein belongs to the glycosyl hydrolase 25 family.

It localises to the secreted. It carries out the reaction Hydrolysis of (1-&gt;4)-beta-linkages between N-acetylmuramic acid and N-acetyl-D-glucosamine residues in a peptidoglycan and between N-acetyl-D-glucosamine residues in chitodextrins.. In terms of biological role, this enzyme has both lysozyme (acetylmuramidase) and diacetylmuramidase activities. The chain is N,O-diacetylmuramidase from Arthroderma benhamiae (strain ATCC MYA-4681 / CBS 112371) (Trichophyton mentagrophytes).